The sequence spans 361 residues: Innexin inx1 (361 aa).

The Cytoplasmic segment spans residues 1–28 (MYKLLGGLKEYLKWQDIVTDNAIFRLHN). The helical transmembrane segment at 29-49 (LFTTVLLLTCSLIITATQYVG) threads the bilayer. The Extracellular segment spans residues 50-109 (NPIHCIVNGLPVRPINTYCWITSTFTMPDAFLRQVGSEVAHPGVANDFGDEDAKKYYTYY). The chain crosses the membrane as a helical span at residues 110 to 130 (QWVCFVLFFQAMLCYTPKWIW). Topologically, residues 131–181 (DSIEGGLLRTLIMGLNRGLCQDDEKCMKKKALIEYLLRHIKRHNMYALKYW) are cytoplasmic. The helical transmembrane segment at 182 to 202 (FCETLCLVNIIGQLYLMNHFF) threads the bilayer. The Extracellular portion of the chain corresponds to 203–267 (DGEFFSYGLR…LPLNIVNEKT (65 aa)). Residues 268-288 (YIFLWFWYIILAALLSVLVVY) traverse the membrane as a helical segment. Over 289–361 (RAVILAVPSV…KIETPSSNNP (73 aa)) the chain is Cytoplasmic.

This sequence belongs to the pannexin family. As to expression, expressed in embryonic neural precursors including the dorsal median neuroblast, glial cells, neuropilar glial ring, developing myoblasts cells and in a circumferential band of epithelial cells at the trochanter/coxa boundary stripe in the developing limb.

The protein resides in the cell membrane. Its subcellular location is the cell junction. It is found in the gap junction. Structural components of the gap junctions. This Schistocerca americana (American grasshopper) protein is Innexin inx1 (inx1).